We begin with the raw amino-acid sequence, 245 residues long: Protein mlo1 (245 aa).

The SAP domain maps to 4 to 38 (YKSLKVAELREKLAEKGLSTAGNKAELVSRLTAAT). The tract at residues 32–245 (SRLTAATESN…AERFGVAAKN (214 aa)) is disordered. Low complexity predominate over residues 37–52 (ATESNDENTSNNNATD). The span at 58–70 (PPEDDIDWGDMEN) shows a compositional bias: acidic residues. Over residues 109 to 118 (TSQAPETSTG) the composition is skewed to polar residues. Over residues 119–130 (AEEHQETTEESK) the composition is skewed to basic and acidic residues. Residue Ser-139 is modified to Phosphoserine. Over residues 182–196 (SSNNKNHNQSKNPQN) the composition is skewed to low complexity.

This sequence belongs to the SAP domain-containing ribonucleoprotein family.

In Schizosaccharomyces pombe (strain 972 / ATCC 24843) (Fission yeast), this protein is Protein mlo1 (mlo1).